The primary structure comprises 316 residues: Methionyl-tRNA formyltransferase (316 aa).

112-115 (SLLP) is a binding site for (6S)-5,6,7,8-tetrahydrofolate.

It belongs to the Fmt family.

It catalyses the reaction L-methionyl-tRNA(fMet) + (6R)-10-formyltetrahydrofolate = N-formyl-L-methionyl-tRNA(fMet) + (6S)-5,6,7,8-tetrahydrofolate + H(+). Functionally, attaches a formyl group to the free amino group of methionyl-tRNA(fMet). The formyl group appears to play a dual role in the initiator identity of N-formylmethionyl-tRNA by promoting its recognition by IF2 and preventing the misappropriation of this tRNA by the elongation apparatus. This Actinobacillus pleuropneumoniae serotype 7 (strain AP76) protein is Methionyl-tRNA formyltransferase.